Consider the following 199-residue polypeptide: NADH-quinone oxidoreductase subunit C (199 aa).

This sequence belongs to the complex I 30 kDa subunit family. As to quaternary structure, NDH-1 is composed of 14 different subunits. Subunits NuoB, C, D, E, F, and G constitute the peripheral sector of the complex.

It localises to the cell inner membrane. The enzyme catalyses a quinone + NADH + 5 H(+)(in) = a quinol + NAD(+) + 4 H(+)(out). NDH-1 shuttles electrons from NADH, via FMN and iron-sulfur (Fe-S) centers, to quinones in the respiratory chain. The immediate electron acceptor for the enzyme in this species is believed to be ubiquinone. Couples the redox reaction to proton translocation (for every two electrons transferred, four hydrogen ions are translocated across the cytoplasmic membrane), and thus conserves the redox energy in a proton gradient. The chain is NADH-quinone oxidoreductase subunit C from Roseobacter denitrificans (strain ATCC 33942 / OCh 114) (Erythrobacter sp. (strain OCh 114)).